A 103-amino-acid polypeptide reads, in one-letter code: NADH-quinone oxidoreductase subunit K (103 aa).

3 helical membrane-spanning segments follow: residues 7–27 (TEHG…GVLV), 31–51 (LIFM…AFIV), and 65–85 (FMLI…LILL).

This sequence belongs to the complex I subunit 4L family. As to quaternary structure, NDH-1 is composed of 14 different subunits. Subunits NuoA, H, J, K, L, M, N constitute the membrane sector of the complex.

The protein localises to the cell inner membrane. The catalysed reaction is a quinone + NADH + 5 H(+)(in) = a quinol + NAD(+) + 4 H(+)(out). Its function is as follows. NDH-1 shuttles electrons from NADH, via FMN and iron-sulfur (Fe-S) centers, to quinones in the respiratory chain. The immediate electron acceptor for the enzyme in this species is believed to be ubiquinone. Couples the redox reaction to proton translocation (for every two electrons transferred, four hydrogen ions are translocated across the cytoplasmic membrane), and thus conserves the redox energy in a proton gradient. The chain is NADH-quinone oxidoreductase subunit K from Nitrosococcus oceani (strain ATCC 19707 / BCRC 17464 / JCM 30415 / NCIMB 11848 / C-107).